A 382-amino-acid chain; its full sequence is MTRAGLSPLAWLDEVADQRRAAGLRRALRTRPAGGTAVDLASNDYLGLSTHPRVVEGAVRAVREWGAGSTGSRLVTGNTELHEGFEQALAAFTGAESALVFSSGYTANLGAVVALSGPGSLLVSDALTHASLVDACRLSRARVVVTPHRDVTAIETALATRDEQRAVVVTDSVFSADGVLAPLRDIHDVCRRHGALLIVDEAHGLGVRGTGGRGLLDEVGLAGAPDVVMTTTLSKALGSQGGVVLGPLAVRDHLIDAARPFIFDTGLAPAAVGAAWAALEVLVDEPSRARAVLDNAAALAQACDVPARPDSAVVSVILGEPEVALAAATACLEQGLRVGCFRPPTVPAGTSRLRLTARASLTDDDLDTARRVLADVLTAARR.

Arg-26 contacts substrate. 104–105 lines the pyridoxal 5'-phosphate pocket; sequence GY. His-129 is a binding site for substrate. Pyridoxal 5'-phosphate is bound by residues Ser-175, 200 to 203, and 232 to 235; these read DEAH and TLSK. Lys-235 carries the N6-(pyridoxal phosphate)lysine modification. Thr-345 contacts substrate.

The protein belongs to the class-II pyridoxal-phosphate-dependent aminotransferase family. BioF subfamily. In terms of assembly, homodimer. Pyridoxal 5'-phosphate is required as a cofactor.

The enzyme catalyses 6-carboxyhexanoyl-[ACP] + L-alanine + H(+) = (8S)-8-amino-7-oxononanoate + holo-[ACP] + CO2. The protein operates within cofactor biosynthesis; biotin biosynthesis. Its function is as follows. Catalyzes the decarboxylative condensation of pimeloyl-[acyl-carrier protein] and L-alanine to produce 8-amino-7-oxononanoate (AON), [acyl-carrier protein], and carbon dioxide. This Mycobacterium sp. (strain JLS) protein is 8-amino-7-oxononanoate synthase.